We begin with the raw amino-acid sequence, 130 residues long: Small ribosomal subunit protein uS9 (130 aa).

The segment at 98–130 is disordered; it reads LKRAGLLTRDPRMKERKKPGLKKARRSPQFSKR. Residues 111-130 are compositionally biased toward basic residues; the sequence is KERKKPGLKKARRSPQFSKR.

This sequence belongs to the universal ribosomal protein uS9 family.

This is Small ribosomal subunit protein uS9 from Staphylococcus saprophyticus subsp. saprophyticus (strain ATCC 15305 / DSM 20229 / NCIMB 8711 / NCTC 7292 / S-41).